Consider the following 79-residue polypeptide: Small ribosomal subunit protein bS18B (79 aa).

The protein belongs to the bacterial ribosomal protein bS18 family. As to quaternary structure, part of the 30S ribosomal subunit. Forms a tight heterodimer with protein bS6.

In terms of biological role, binds as a heterodimer with protein bS6 to the central domain of the 16S rRNA, where it helps stabilize the platform of the 30S subunit. The protein is Small ribosomal subunit protein bS18B of Mycolicibacterium gilvum (strain PYR-GCK) (Mycobacterium gilvum (strain PYR-GCK)).